A 349-amino-acid chain; its full sequence is Protein-glutamate methylesterase/protein-glutamine glutaminase (349 aa).

In terms of domain architecture, Response regulatory spans 5 to 122 (RVLCVDDSAL…REGMLAYSEL (118 aa)). D56 carries the post-translational modification 4-aspartylphosphate. The 193-residue stretch at 152-344 (LLSSEKLIAI…QRMLAQISSG (193 aa)) folds into the CheB-type methylesterase domain. Residues S164, H190, and D286 contribute to the active site.

It belongs to the CheB family. Post-translationally, phosphorylated by CheA. Phosphorylation of the N-terminal regulatory domain activates the methylesterase activity.

The protein resides in the cytoplasm. The enzyme catalyses [protein]-L-glutamate 5-O-methyl ester + H2O = L-glutamyl-[protein] + methanol + H(+). It carries out the reaction L-glutaminyl-[protein] + H2O = L-glutamyl-[protein] + NH4(+). Functionally, involved in chemotaxis. Part of a chemotaxis signal transduction system that modulates chemotaxis in response to various stimuli. Catalyzes the demethylation of specific methylglutamate residues introduced into the chemoreceptors (methyl-accepting chemotaxis proteins or MCP) by CheR. Also mediates the irreversible deamidation of specific glutamine residues to glutamic acid. The protein is Protein-glutamate methylesterase/protein-glutamine glutaminase of Yersinia pestis bv. Antiqua (strain Antiqua).